Here is a 135-residue protein sequence, read N- to C-terminus: Nitrogen fixation protein NifU 1 (135 aa).

Over residues 1–10 (MRDMQDDDTK) the composition is skewed to basic and acidic residues. Positions 1 to 29 (MRDMQDDDTKSPAPPPAAAAAARRAAGQA) are disordered. A compositionally biased stretch (low complexity) spans 18–29 (AAAAARRAAGQA).

Belongs to the NifU family.

Its function is as follows. May be involved in the formation or repair of [Fe-S] clusters present in iron-sulfur proteins. In Rhodobacter capsulatus (Rhodopseudomonas capsulata), this protein is Nitrogen fixation protein NifU 1 (nifU1).